A 140-amino-acid chain; its full sequence is MEVVKDIAESYGAERIYTVGDVVTQNFFKHGLIPTSAAVDEKTRRGVRIEQLAVFKRVIKVNNPPGYITEEAWSAVEEAVRGGVIIKVEGEEDMLSLAFIKLAPPKSIVAYGHYLGALIALPVDWYKEYVLKLFDYLEKC.

6 residues coordinate GTP: Asp21, Val22, Val23, Asp40, Lys42, and Glu92.

Belongs to the GTP-dependent DPCK family.

The catalysed reaction is 3'-dephospho-CoA + GTP = GDP + CoA + H(+). It functions in the pathway cofactor biosynthesis; coenzyme A biosynthesis. In terms of biological role, catalyzes the GTP-dependent phosphorylation of the 3'-hydroxyl group of dephosphocoenzyme A to form coenzyme A (CoA). The polypeptide is GTP-dependent dephospho-CoA kinase (Pyrobaculum aerophilum (strain ATCC 51768 / DSM 7523 / JCM 9630 / CIP 104966 / NBRC 100827 / IM2)).